A 246-amino-acid chain; its full sequence is DNA repair protein RecO (246 aa).

Belongs to the RecO family.

Involved in DNA repair and RecF pathway recombination. This chain is DNA repair protein RecO, found in Maridesulfovibrio salexigens (strain ATCC 14822 / DSM 2638 / NCIMB 8403 / VKM B-1763) (Desulfovibrio salexigens).